The following is a 145-amino-acid chain: Large ribosomal subunit protein uL15 (145 aa).

The tract at residues 20-54 (GRGMASGKGKTATRGHKGQNSRSGGGVRPGFEGGQ) is disordered. The segment covering 42–52 (SGGGVRPGFEG) has biased composition (gly residues).

This sequence belongs to the universal ribosomal protein uL15 family. In terms of assembly, part of the 50S ribosomal subunit.

Functionally, binds to the 23S rRNA. This is Large ribosomal subunit protein uL15 from Mycoplasma mycoides subsp. mycoides SC (strain CCUG 32753 / NCTC 10114 / PG1).